The sequence spans 92 residues: MARSIWKGPFVDGYLIKKVQKLMESGKSEMIKTWSRRSTILPIFVGFTFSVHNGNKFIPVSVNEEMVGRKLGEFAPTRTFHGHGADKKVKRK.

It belongs to the universal ribosomal protein uS19 family.

Protein S19 forms a complex with S13 that binds strongly to the 16S ribosomal RNA. This Rickettsia felis (strain ATCC VR-1525 / URRWXCal2) (Rickettsia azadi) protein is Small ribosomal subunit protein uS19.